The sequence spans 253 residues: Proteasome subunit alpha (253 aa).

Low complexity predominate over residues 232 to 242 (AAGASTAGEAG). The interval 232–253 (AAGASTAGEAGSAEDEGSDDEK) is disordered. Over residues 243–253 (SAEDEGSDDEK) the composition is skewed to acidic residues.

It belongs to the peptidase T1A family. As to quaternary structure, the 20S proteasome core is composed of 14 alpha and 14 beta subunits that assemble into four stacked heptameric rings, resulting in a barrel-shaped structure. The two inner rings, each composed of seven catalytic beta subunits, are sandwiched by two outer rings, each composed of seven alpha subunits. The catalytic chamber with the active sites is on the inside of the barrel. Has a gated structure, the ends of the cylinder being occluded by the N-termini of the alpha-subunits. Is capped by the proteasome-associated ATPase, ARC.

It is found in the cytoplasm. It participates in protein degradation; proteasomal Pup-dependent pathway. Its activity is regulated as follows. The formation of the proteasomal ATPase ARC-20S proteasome complex, likely via the docking of the C-termini of ARC into the intersubunit pockets in the alpha-rings, may trigger opening of the gate for substrate entry. Interconversion between the open-gate and close-gate conformations leads to a dynamic regulation of the 20S proteasome proteolysis activity. In terms of biological role, component of the proteasome core, a large protease complex with broad specificity involved in protein degradation. The protein is Proteasome subunit alpha of Streptomyces avermitilis (strain ATCC 31267 / DSM 46492 / JCM 5070 / NBRC 14893 / NCIMB 12804 / NRRL 8165 / MA-4680).